The following is a 608-amino-acid chain: Chaperone protein HtpG (608 aa).

Positions 1-332 are a; substrate-binding; it reads MQFQTEVNQL…VEDLPLNVSR (332 aa). A b region spans residues 333–536; sequence EILQENQILK…KNKPDFAMQQ (204 aa). The tract at residues 537-608 is c; that stretch reads LLKQMGQEQN…LTKIINKAFS (72 aa).

It belongs to the heat shock protein 90 family. In terms of assembly, homodimer.

The protein localises to the cytoplasm. Functionally, molecular chaperone. Has ATPase activity. The chain is Chaperone protein HtpG from Campylobacter jejuni subsp. jejuni serotype O:2 (strain ATCC 700819 / NCTC 11168).